Reading from the N-terminus, the 554-residue chain is Pigment biosynthesis transcriptional activator pigB (554 aa).

A disordered region spans residues 1-21 (MFTSSSPEQRKPRQSRQLPGA). Positions 23-40 (CEECRRKKLRCDRQQPQC) form a DNA-binding region, zn(2)-C6 fungal-type.

Its subcellular location is the nucleus. Transcription factor; part of the gene cluster that mediates the biosynthesis of azaphilone pigments (MonAzPs), a complex mixture of compounds with a common azaphilone skeleton very widely used as food colorants. Positively regulates the expression of the azaphilone pigments (MonAzPs) gene cluster. The polypeptide is Pigment biosynthesis transcriptional activator pigB (Monascus ruber (Mold)).